Reading from the N-terminus, the 64-residue chain is Conotoxin Leo-T1 (64 aa).

The first 22 residues, 1–22 (MRCLPVFIILLLLIPSAPSVDA), serve as a signal peptide directing secretion. Residues 23-48 (QPKTEDDVPLASLHDNAKLTLQGLWD) constitute a propeptide that is removed on maturation.

The protein belongs to the conotoxin T superfamily. Contains 2 disulfide bonds that can be either 'C1-C3, C2-C4' or 'C1-C4, C2-C3', since these disulfide connectivities have been observed for conotoxins with cysteine framework V (for examples, see AC P0DQQ7 and AC P81755). Expressed by the venom duct.

It localises to the secreted. This chain is Conotoxin Leo-T1, found in Conus leopardus (Leopard cone).